Reading from the N-terminus, the 793-residue chain is Phenylalanine--tRNA ligase beta subunit (793 aa).

The tRNA-binding domain occupies 39 to 148 (AKPFTGVVVG…EDAPVGLNIR (110 aa)). The B5 domain occupies 400–476 (PKREAIELNQ…RIHGYDNIQI (77 aa)). Mg(2+) contacts are provided by Asp-454, Asp-460, Glu-463, and Glu-464. Residues 698 to 791 (SRFPSVRRDI…LENTYQATLR (94 aa)) form the FDX-ACB domain.

Belongs to the phenylalanyl-tRNA synthetase beta subunit family. Type 1 subfamily. As to quaternary structure, tetramer of two alpha and two beta subunits. Requires Mg(2+) as cofactor.

The protein localises to the cytoplasm. It catalyses the reaction tRNA(Phe) + L-phenylalanine + ATP = L-phenylalanyl-tRNA(Phe) + AMP + diphosphate + H(+). The polypeptide is Phenylalanine--tRNA ligase beta subunit (Acinetobacter baylyi (strain ATCC 33305 / BD413 / ADP1)).